A 341-amino-acid polypeptide reads, in one-letter code: uncharacterized protein (341 aa).

This is an uncharacterized protein from Treponema pallidum (strain Nichols).